A 346-amino-acid polypeptide reads, in one-letter code: Dihydroorotase (346 aa).

2 residues coordinate Zn(2+): His14 and His16. Substrate is bound by residues 16–18 (HLR) and Asn42. Zn(2+) contacts are provided by Lys100, His137, and His175. The residue at position 100 (Lys100) is an N6-carboxylysine. Position 137 (His137) interacts with substrate. Leu220 lines the substrate pocket. Asp248 lines the Zn(2+) pocket. Residue Asp248 is part of the active site. Substrate-binding residues include His252 and Ala264.

Belongs to the metallo-dependent hydrolases superfamily. DHOase family. Class II DHOase subfamily. As to quaternary structure, homodimer. Requires Zn(2+) as cofactor.

It catalyses the reaction (S)-dihydroorotate + H2O = N-carbamoyl-L-aspartate + H(+). It functions in the pathway pyrimidine metabolism; UMP biosynthesis via de novo pathway; (S)-dihydroorotate from bicarbonate: step 3/3. Catalyzes the reversible cyclization of carbamoyl aspartate to dihydroorotate. This chain is Dihydroorotase, found in Ruegeria pomeroyi (strain ATCC 700808 / DSM 15171 / DSS-3) (Silicibacter pomeroyi).